The following is a 64-amino-acid chain: Prokaryotic ubiquitin-like protein Pup (64 aa).

The tract at residues 1 to 37 is disordered; the sequence is MAQEQTKRGGGGGDDEDVTGTTAAGQERREKLAQDTD. The segment at 21-58 is ARC ATPase binding; it reads TTAAGQERREKLAQDTDDLLDEIDDVLEENAEDFVRAY. Residues 25 to 52 adopt a coiled-coil conformation; that stretch reads GQERREKLAQDTDDLLDEIDDVLEENAE. Gln64 carries the deamidated glutamine modification. Residue Gln64 forms an Isoglutamyl lysine isopeptide (Gln-Lys) (interchain with K-? in acceptor proteins) linkage.

It belongs to the prokaryotic ubiquitin-like protein family. As to quaternary structure, strongly interacts with the proteasome-associated ATPase ARC through a hydrophobic interface; the interacting region of Pup lies in its C-terminal half. There is one Pup binding site per ARC hexamer ring. Is modified by deamidation of its C-terminal glutamine to glutamate by the deamidase Dop, a prerequisite to the subsequent pupylation process.

It functions in the pathway protein degradation; proteasomal Pup-dependent pathway. Its function is as follows. Protein modifier that is covalently attached to lysine residues of substrate proteins, thereby targeting them for proteasomal degradation. The tagging system is termed pupylation. This is Prokaryotic ubiquitin-like protein Pup from Mycobacterium marinum (strain ATCC BAA-535 / M).